A 406-amino-acid polypeptide reads, in one-letter code: S-adenosylmethionine synthase (406 aa).

H16 contributes to the ATP binding site. Mg(2+) is bound at residue D18. Position 44 (E44) interacts with K(+). 2 residues coordinate L-methionine: E57 and Q109. A flexible loop region spans residues 109–119 (QSPQIAQGVDE). Residues 174-176 (DAK), 249-250 (RF), D258, 264-265 (RK), A281, and K285 contribute to the ATP site. D258 is an L-methionine binding site. K289 is an L-methionine binding site.

The protein belongs to the AdoMet synthase family. As to quaternary structure, homotetramer; dimer of dimers. The cofactor is Mg(2+). It depends on K(+) as a cofactor.

The protein resides in the cytoplasm. The enzyme catalyses L-methionine + ATP + H2O = S-adenosyl-L-methionine + phosphate + diphosphate. The protein operates within amino-acid biosynthesis; S-adenosyl-L-methionine biosynthesis; S-adenosyl-L-methionine from L-methionine: step 1/1. In terms of biological role, catalyzes the formation of S-adenosylmethionine (AdoMet) from methionine and ATP. The overall synthetic reaction is composed of two sequential steps, AdoMet formation and the subsequent tripolyphosphate hydrolysis which occurs prior to release of AdoMet from the enzyme. This Sphingopyxis alaskensis (strain DSM 13593 / LMG 18877 / RB2256) (Sphingomonas alaskensis) protein is S-adenosylmethionine synthase.